Here is a 92-residue protein sequence, read N- to C-terminus: Cell division topological specificity factor (92 aa).

Belongs to the MinE family.

Functionally, prevents the cell division inhibition by proteins MinC and MinD at internal division sites while permitting inhibition at polar sites. This ensures cell division at the proper site by restricting the formation of a division septum at the midpoint of the long axis of the cell. This chain is Cell division topological specificity factor, found in Symbiobacterium thermophilum (strain DSM 24528 / JCM 14929 / IAM 14863 / T).